A 78-amino-acid chain; its full sequence is TP53-regulated inhibitor of apoptosis 1-A (78 aa).

Residues Met-1–Ile-52 are a coiled coil. The CHCH domain occupies Gly-5–Lys-55. 2 short sequence motifs (cx9C motif) span residues Cys-8–Cys-18 and Cys-37–Cys-47. Disulfide bonds link Cys-8–Cys-47 and Cys-18–Cys-37.

It belongs to the TRIAP1/MDM35 family. Monomer. Forms a complex with prelid1 in the mitochondrion intermembrane space. Interacts with prelid3a.

It is found in the mitochondrion. It localises to the mitochondrion intermembrane space. The enzyme catalyses a 1,2-diacyl-sn-glycero-3-phosphate(in) = a 1,2-diacyl-sn-glycero-3-phosphate(out). Functionally, involved in the modulation of the mitochondrial apoptotic pathway by ensuring the accumulation of cardiolipin (CL) in mitochondrial membranes. The triap1:prelid1 complex probably functions as a phosphatidic acid (PA) transporter across the mitochondrion intermembrane space to provide PA for cardiolipin CL synthesis in the inner membrane. Likewise, the triap1:prelid3a complex mediates the transfer of phosphatidic acid (PA) between liposomes (in vitro) and probably functions as a PA transporter across the mitochondrion intermembrane space (in vivo). Mediates cell survival by inhibiting activation of caspase-9 which prevents induction of apoptosis. Required for pronephros development; probably involved at an early stage in the formation of pronephric components derived from the somatic layer. This chain is TP53-regulated inhibitor of apoptosis 1-A (triap1-a), found in Xenopus laevis (African clawed frog).